Here is a 354-residue protein sequence, read N- to C-terminus: Uroporphyrinogen decarboxylase (354 aa).

Substrate is bound by residues 27–31 (RQAGR), D77, Y154, S209, and H327.

This sequence belongs to the uroporphyrinogen decarboxylase family. Homodimer.

The protein localises to the cytoplasm. It carries out the reaction uroporphyrinogen III + 4 H(+) = coproporphyrinogen III + 4 CO2. The protein operates within porphyrin-containing compound metabolism; protoporphyrin-IX biosynthesis; coproporphyrinogen-III from 5-aminolevulinate: step 4/4. Catalyzes the decarboxylation of four acetate groups of uroporphyrinogen-III to yield coproporphyrinogen-III. The protein is Uroporphyrinogen decarboxylase of Shewanella baltica (strain OS223).